The following is a 931-amino-acid chain: Mitochondrial cox1 translation regulator ppr4 (931 aa).

Residues 1 to 16 (MSKSFAYRHIWCFWRF) constitute a mitochondrion transit peptide. 7 PPR repeats span residues 247–277 (NEVLYTQYLGFLTKRGDYQIAIYMFDEMYRT), 282–316 (SFTACRLMIESLVRQNKFEEAISLYKKIIAKRPKI), 429–461 (HLLNCFLNSSTVSLDVSMVLELLRDLKKKKIKV), 462–496 (DERTLVICITIFSRRKDLFAMEKIHQYFSDQGIKT), 497–531 (SNQAYAALLDAYIEAEDTEKIELYLGKIRRLGITE), 598–632 (NVVHYSIAATVLGNLNQLDQLLLLEKRMESEGKAP), and 683–713 (PPSLFSSLIKEYTSLGDIKEAKQVLSTYLEY).

In terms of assembly, component of the MRH5C complex, composed of mrh5, ppr4, mtf2, and sls1. Proteins mtf2 and sls1 form a subcomplex that serves as a scaffold to bring mrh5 and ppr4 together. The MRH5C complex associates with the small subunit of the mitochondrial ribosome.

It is found in the mitochondrion. Its function is as follows. RNA-binding translation activation factor that as part of the MRH5C complex specifically recruits cox1 mRNA to the mitochondrial ribosome for translation initiation. This Schizosaccharomyces pombe (strain 972 / ATCC 24843) (Fission yeast) protein is Mitochondrial cox1 translation regulator ppr4.